Here is a 199-residue protein sequence, read N- to C-terminus: Small ribosomal subunit protein uS4 (199 aa).

An S4 RNA-binding domain is found at 91 to 151 (SRLDNLVYRF…EKSKNVKAIA (61 aa)).

It belongs to the universal ribosomal protein uS4 family. Part of the 30S ribosomal subunit. Contacts protein S5. The interaction surface between S4 and S5 is involved in control of translational fidelity.

Functionally, one of the primary rRNA binding proteins, it binds directly to 16S rRNA where it nucleates assembly of the body of the 30S subunit. In terms of biological role, with S5 and S12 plays an important role in translational accuracy. The protein is Small ribosomal subunit protein uS4 of Exiguobacterium sp. (strain ATCC BAA-1283 / AT1b).